The primary structure comprises 138 residues: Large ribosomal subunit protein uL11c (138 aa).

The protein belongs to the universal ribosomal protein uL11 family. In terms of assembly, part of the ribosomal stalk of the 50S ribosomal subunit. Interacts with L10 and the large rRNA to form the base of the stalk. L10 forms an elongated spine to which L12 dimers bind in a sequential fashion forming a multimeric L10(L12)X complex.

The protein localises to the plastid. It is found in the chloroplast. In terms of biological role, forms part of the ribosomal stalk which helps the ribosome interact with GTP-bound translation factors. The chain is Large ribosomal subunit protein uL11c from Cyanidioschyzon merolae (strain NIES-3377 / 10D) (Unicellular red alga).